The sequence spans 212 residues: Pyridoxine/pyridoxamine 5'-phosphate oxidase (212 aa).

Substrate-binding positions include 8-11 (RREY) and K66. Residues 61 to 66 (RIVLLK), 76 to 77 (FT), R82, K83, and Q105 contribute to the FMN site. Residues Y123, R127, and S131 each coordinate substrate. FMN-binding positions include 140–141 (QS) and W185. 191–193 (RLH) contributes to the substrate binding site. R195 is an FMN binding site.

Belongs to the pyridoxamine 5'-phosphate oxidase family. Homodimer. The cofactor is FMN.

It carries out the reaction pyridoxamine 5'-phosphate + O2 + H2O = pyridoxal 5'-phosphate + H2O2 + NH4(+). The enzyme catalyses pyridoxine 5'-phosphate + O2 = pyridoxal 5'-phosphate + H2O2. Its pathway is cofactor metabolism; pyridoxal 5'-phosphate salvage; pyridoxal 5'-phosphate from pyridoxamine 5'-phosphate: step 1/1. It functions in the pathway cofactor metabolism; pyridoxal 5'-phosphate salvage; pyridoxal 5'-phosphate from pyridoxine 5'-phosphate: step 1/1. Its function is as follows. Catalyzes the oxidation of either pyridoxine 5'-phosphate (PNP) or pyridoxamine 5'-phosphate (PMP) into pyridoxal 5'-phosphate (PLP). The chain is Pyridoxine/pyridoxamine 5'-phosphate oxidase from Shewanella oneidensis (strain ATCC 700550 / JCM 31522 / CIP 106686 / LMG 19005 / NCIMB 14063 / MR-1).